We begin with the raw amino-acid sequence, 167 residues long: Large ribosomal subunit protein bL9 (167 aa).

This sequence belongs to the bacterial ribosomal protein bL9 family.

Its function is as follows. Binds to the 23S rRNA. The polypeptide is Large ribosomal subunit protein bL9 (Nitratidesulfovibrio vulgaris (strain DSM 19637 / Miyazaki F) (Desulfovibrio vulgaris)).